We begin with the raw amino-acid sequence, 134 residues long: UPF0102 protein Dshi_2830 (134 aa).

Belongs to the UPF0102 family.

The chain is UPF0102 protein Dshi_2830 from Dinoroseobacter shibae (strain DSM 16493 / NCIMB 14021 / DFL 12).